Reading from the N-terminus, the 94-residue chain is Small ribosomal subunit protein uS19 (94 aa).

It belongs to the universal ribosomal protein uS19 family.

In terms of biological role, protein S19 forms a complex with S13 that binds strongly to the 16S ribosomal RNA. In Wolbachia sp. subsp. Brugia malayi (strain TRS), this protein is Small ribosomal subunit protein uS19.